The following is a 697-amino-acid chain: Trishanku (697 aa).

The tract at residues 1-94 (MEIEPVVRIS…NNNSNSNGTD (94 aa)) is disordered. Positions 12 to 47 (NGNNNQNNNNNNNNNTNNNSNNNNNNNNSSNINSTN) are enriched in low complexity. The span at 58-72 (KMISNINNQKSPNPL) shows a compositional bias: polar residues. The segment covering 73 to 91 (NSSVDDNNNTNNNNNSNSN) has biased composition (low complexity). The BTB domain maps to 122-189 (SDVIFKVGDR…ICIGILDLDY (68 aa)). The interval 311 to 455 (IQQQQQQQQQ…DSANDDYEYS (145 aa)) is disordered. Low complexity predominate over residues 312–331 (QQQQQQQQQQLQSANGASGK). The segment covering 332–344 (SHGKRSSSSHLKK) has biased composition (basic residues). Over residues 353–363 (GSCSSRCSSRR) the composition is skewed to low complexity. Positions 416–453 (DDFENDSEDGDDDDEDDDEDDDFTDDDDKDDSANDDYE) are enriched in acidic residues.

In terms of tissue distribution, expressed strongly in presumptive spore (prespore or psp) cells during the late G2 phase of cell cycle. Present at a low level in vegetative cells.

Required for normal morphogenesis and cell-type stability. The chain is Trishanku (triA) from Dictyostelium discoideum (Social amoeba).